The chain runs to 519 residues: Xylose import ATP-binding protein XylG (519 aa).

2 consecutive ABC transporter domains span residues 6–245 and 262–507; these read MTMR…VGRE and FEAR…IRPV. 38–45 provides a ligand contact to ATP; sequence GENGAGKS.

It belongs to the ABC transporter superfamily. Xylose importer (TC 3.A.1.2.4) family. As to quaternary structure, the complex is composed of two ATP-binding proteins (XylG), two transmembrane proteins (XylH) and a solute-binding protein (XylF).

It is found in the cell inner membrane. It catalyses the reaction D-xylose(out) + ATP + H2O = D-xylose(in) + ADP + phosphate + H(+). In terms of biological role, part of the ABC transporter complex XylFGH involved in xylose import. Responsible for energy coupling to the transport system. The polypeptide is Xylose import ATP-binding protein XylG (Paraburkholderia xenovorans (strain LB400)).